Reading from the N-terminus, the 184-residue chain is Acetyl-CoA decarbonylase/synthase complex subunit epsilon 1 (184 aa).

The protein belongs to the CdhB family. In terms of assembly, heterotetramer of two alpha and two epsilon subunits. The ACDS complex is made up of alpha, epsilon, beta, gamma and delta subunits with a probable stoichiometry of (alpha(2)epsilon(2))(4)-beta(8)-(gamma(1)delta(1))(8).

Functionally, part of a complex that catalyzes the reversible cleavage of acetyl-CoA, allowing autotrophic growth from CO(2). The alpha-epsilon subcomponent functions as a carbon monoxide dehydrogenase. The precise role of the epsilon subunit is unclear; it may have a stabilizing role within the alpha(2)epsilon(2) component and/or be involved in electron transfer to FAD during a potential FAD-mediated CO oxidation. In Archaeoglobus fulgidus (strain ATCC 49558 / DSM 4304 / JCM 9628 / NBRC 100126 / VC-16), this protein is Acetyl-CoA decarbonylase/synthase complex subunit epsilon 1 (cdhB1).